The following is a 202-amino-acid chain: Small ribosomal subunit protein uS4 (202 aa).

The tract at residues 16–43 is disordered; the sequence is GELPGLSRKTPRRAYPPGQHGQGRRKRS. In terms of domain architecture, S4 RNA-binding spans 90–152; it reads MRLDNTVFRL…DNSRRMVETN (63 aa).

It belongs to the universal ribosomal protein uS4 family. As to quaternary structure, part of the 30S ribosomal subunit. Contacts protein S5. The interaction surface between S4 and S5 is involved in control of translational fidelity.

One of the primary rRNA binding proteins, it binds directly to 16S rRNA where it nucleates assembly of the body of the 30S subunit. Functionally, with S5 and S12 plays an important role in translational accuracy. The protein is Small ribosomal subunit protein uS4 of Crocosphaera subtropica (strain ATCC 51142 / BH68) (Cyanothece sp. (strain ATCC 51142)).